An 88-amino-acid polypeptide reads, in one-letter code: Phage-like element PBSX protein XkdR (88 aa).

To B.subtilis YqbR.

This is Phage-like element PBSX protein XkdR (xkdR) from Bacillus subtilis (strain 168).